The following is a 149-amino-acid chain: Ribonuclease P protein component (149 aa).

The disordered stretch occupies residues 123–149 (GTKVSRRSNGALHDAAPSSQPDPTVSG). Over residues 139–149 (PSSQPDPTVSG) the composition is skewed to polar residues.

Belongs to the RnpA family. In terms of assembly, consists of a catalytic RNA component (M1 or rnpB) and a protein subunit.

It carries out the reaction Endonucleolytic cleavage of RNA, removing 5'-extranucleotides from tRNA precursor.. Functionally, RNaseP catalyzes the removal of the 5'-leader sequence from pre-tRNA to produce the mature 5'-terminus. It can also cleave other RNA substrates such as 4.5S RNA. The protein component plays an auxiliary but essential role in vivo by binding to the 5'-leader sequence and broadening the substrate specificity of the ribozyme. The polypeptide is Ribonuclease P protein component (Caulobacter vibrioides (strain ATCC 19089 / CIP 103742 / CB 15) (Caulobacter crescentus)).